A 460-amino-acid polypeptide reads, in one-letter code: MAVSLWQQCIGRLQDELSAQQFSMWIRPLQAEMDGDTLVLYAPNRFVLDWVRDKYINIINQFFTEQMGNDAPKLRFDIGSRPSAKKPEPAPVAAVRVPSPQTKASVGTAFNTTEPVANTNHRSNINPTYQFDNFVEGKSNQLGKAAALQVAENPGGAYNPLFLYGGTGLGKTHLLHAVGNGIIKNNPNAKVVYMHSERFVQDMVKALQNNAIEEFKRYYRSVDALFIDDIQFFANKDRSQEEFFHTFNALLEGNHQIILTSDRYPKEIDGVEDRLKSRFGWGLTVAIEPPELETRVAILMRKAQESGINLPDEVAFFIAKRLRSNVRELEGALNRVIANANFTGRPITIDFVREALRDLLALQEKLVTIDNIQKTVAEYYKIKMADMLSKRRSRSVARPRQVAMALSKELTNQSLPEIGDAFGGRDHTTVLHACRKIAQLREESHDIKEDYANLIRTLSS.

The domain I, interacts with DnaA modulators stretch occupies residues 1–84; it reads MAVSLWQQCI…RFDIGSRPSA (84 aa). The segment at 84 to 123 is domain II; that stretch reads AKKPEPAPVAAVRVPSPQTKASVGTAFNTTEPVANTNHRS. A domain III, AAA+ region region spans residues 124 to 340; the sequence is NINPTYQFDN…GALNRVIANA (217 aa). ATP is bound by residues G168, G170, K171, and T172. The segment at 341-460 is domain IV, binds dsDNA; that stretch reads NFTGRPITID…YANLIRTLSS (120 aa).

It belongs to the DnaA family. Oligomerizes as a right-handed, spiral filament on DNA at oriC.

Its subcellular location is the cytoplasm. Its function is as follows. Plays an essential role in the initiation and regulation of chromosomal replication. ATP-DnaA binds to the origin of replication (oriC) to initiate formation of the DNA replication initiation complex once per cell cycle. Binds the DnaA box (a 9 base pair repeat at the origin) and separates the double-stranded (ds)DNA. Forms a right-handed helical filament on oriC DNA; dsDNA binds to the exterior of the filament while single-stranded (ss)DNA is stabiized in the filament's interior. The ATP-DnaA-oriC complex binds and stabilizes one strand of the AT-rich DNA unwinding element (DUE), permitting loading of DNA polymerase. After initiation quickly degrades to an ADP-DnaA complex that is not apt for DNA replication. Binds acidic phospholipids. The sequence is that of Chromosomal replication initiator protein DnaA from Shewanella oneidensis (strain ATCC 700550 / JCM 31522 / CIP 106686 / LMG 19005 / NCIMB 14063 / MR-1).